Here is a 124-residue protein sequence, read N- to C-terminus: Urocortin (124 aa).

An N-terminal signal peptide occupies residues 1-25; sequence MRQAGRAALLAALLLLVQLCPGSSQ. Residues 23-46 are disordered; sequence SSQRSPEAAGVQDPSLRWSPGARN. A propeptide spanning residues 26–82 is cleaved from the precursor; it reads RSPEAAGVQDPSLRWSPGARNQGGGARALLLLLAERFPRRAGPGRLGLGTAGERPRR. A Valine amide modification is found at Val122.

The protein belongs to the sauvagine/corticotropin-releasing factor/urotensin I family. In terms of assembly, interacts with CRHR1 and CRHR2 (via their N-terminal extracellular domain). In terms of tissue distribution, keratinocytes in epidermis and the outer and inner root sheaths of hair follicles, epithelium of sebaceous and sweat glands, erector pili muscle, cutaneous blood vessel walls, cutaneous nerves and dermal mononuclear cells. Detected in plasma cells in the lamia propria in colon mucosa (at protein level). Expressed in pituitary and adrenal glands. Detected in plasma cells in the lamia propria in colon mucosa.

It localises to the secreted. Acts in vitro to stimulate the secretion of adrenocorticotropic hormone (ACTH). Binds with high affinity to CRF receptor types 1, 2-alpha, and 2-beta. Plays a role in the establishment of normal hearing thresholds. Reduces food intake and regulates ghrelin levels in gastric body and plasma. This is Urocortin (UCN) from Homo sapiens (Human).